Reading from the N-terminus, the 193-residue chain is Orotate phosphoribosyltransferase (193 aa).

Residue 114-122 coordinates 5-phospho-alpha-D-ribose 1-diphosphate; it reads EDVITTGGS. Positions 118 and 146 each coordinate orotate.

This sequence belongs to the purine/pyrimidine phosphoribosyltransferase family. PyrE subfamily. Homodimer. Mg(2+) serves as cofactor.

It carries out the reaction orotidine 5'-phosphate + diphosphate = orotate + 5-phospho-alpha-D-ribose 1-diphosphate. Its pathway is pyrimidine metabolism; UMP biosynthesis via de novo pathway; UMP from orotate: step 1/2. Its function is as follows. Catalyzes the transfer of a ribosyl phosphate group from 5-phosphoribose 1-diphosphate to orotate, leading to the formation of orotidine monophosphate (OMP). This chain is Orotate phosphoribosyltransferase, found in Chlorobaculum parvum (strain DSM 263 / NCIMB 8327) (Chlorobium vibrioforme subsp. thiosulfatophilum).